The chain runs to 90 residues: Cyclin-dependent kinases regulatory subunit 1 (90 aa).

It belongs to the CKS family.

Functionally, binds to the catalytic subunit of the cyclin dependent kinases and is essential for their biological function. This is Cyclin-dependent kinases regulatory subunit 1 (CKS1) from Oryza sativa subsp. indica (Rice).